Here is a 494-residue protein sequence, read N- to C-terminus: 1-aminocyclopropane-1-carboxylate synthase 2 (494 aa).

The residue at position 279 (lysine 279) is an N6-(pyridoxal phosphate)lysine. The disordered stretch occupies residues 474–494 (NVLNSPHTMSPHSPLVRARTY). Residues 475–484 (VLNSPHTMSP) show a composition bias toward polar residues.

This sequence belongs to the class-I pyridoxal-phosphate-dependent aminotransferase family. Homodimer. Requires pyridoxal 5'-phosphate as cofactor.

It carries out the reaction S-adenosyl-L-methionine = 1-aminocyclopropane-1-carboxylate + S-methyl-5'-thioadenosine + H(+). It functions in the pathway alkene biosynthesis; ethylene biosynthesis via S-adenosyl-L-methionine; ethylene from S-adenosyl-L-methionine: step 1/2. In terms of biological role, catalyzes the formation of 1-aminocyclopropane-1-carboxylate, a direct precursor of ethylene in higher plants. The protein is 1-aminocyclopropane-1-carboxylate synthase 2 (ACS2) of Cucurbita pepo (Vegetable marrow).